Here is a 60-residue protein sequence, read N- to C-terminus: Phospholipase A2 (60 aa).

Residues Tyr27, Gly29, and Gly31 each coordinate Ca(2+). A disulfide bridge connects residues Cys28 and Cys44. The active site involves His47. Residue Asp48 participates in Ca(2+) binding.

Requires Ca(2+) as cofactor. Expressed by the venom gland.

It is found in the secreted. The catalysed reaction is a 1,2-diacyl-sn-glycero-3-phosphocholine + H2O = a 1-acyl-sn-glycero-3-phosphocholine + a fatty acid + H(+). In terms of biological role, snake venom phospholipase A2 (PLA2) that displays mild but significant inhibition of mouse platelet aggregation induced by ADP and collagen. In vivo, induces edema in the foot pads and gastrocnemius muscles of mice but shows no myonecrotic or myotoxic activity. PA2 catalyzes the calcium-dependent hydrolysis of the 2-acyl groups in 3-sn-phosphoglycerides. The chain is Phospholipase A2 from Lachesis muta rhombeata (Bushmaster).